We begin with the raw amino-acid sequence, 376 residues long: MLTRSDIHQKSRRWVVKIGSALLTNDGRGLNKDAMAQWVSQMVTLRQQGIELVIVSSGSVAEGMQRLGWSQRPSELNELQAAAAVGQMGLVQAYESEFAKNGIHTAQILMTHDDLSNRARYLNASNTIQTLLEHGVVPVINENDTVVTDEIRFGDNDTLAALTANLVSADVLVILTDQNGLYNDNPRTNPNAELISEAQVSRKDIEAMASSEGGSLGKGGMYTKVMAAKRAARSGTATFIASGREDNVLPRLLAGEPLGTLLIPDLEPLTAKKRWLAGHLQAKGQLVLDEGAVKALQSSGKSLLPIGVKGMSGEFQRGEMVVCVNENNQEVARGLVNYPFFETQKIMGHPSSEINQLLGYSDGEFLIHCDNLVLAD.

Lysine 17 is an ATP binding site. Substrate is bound by residues serine 57, aspartate 144, and asparagine 156. 176 to 177 (TD) contributes to the ATP binding site. The region spanning 283-361 (KGQLVLDEGA…SEINQLLGYS (79 aa)) is the PUA domain.

The protein belongs to the glutamate 5-kinase family.

The protein resides in the cytoplasm. The enzyme catalyses L-glutamate + ATP = L-glutamyl 5-phosphate + ADP. It functions in the pathway amino-acid biosynthesis; L-proline biosynthesis; L-glutamate 5-semialdehyde from L-glutamate: step 1/2. Functionally, catalyzes the transfer of a phosphate group to glutamate to form L-glutamate 5-phosphate. This chain is Glutamate 5-kinase, found in Hydrogenovibrio crunogenus (strain DSM 25203 / XCL-2) (Thiomicrospira crunogena).